The chain runs to 270 residues: MTVQTAERTITLVQAIWPKLRKEAEKQCEVNPWLAKDLARKILSKKTLRESLSCVLALPLDHVTGSSESMENWFYSILGLNDEKIIRSAMIDLDRLYTTNPACPDLISAFLSFRGFHALQLYRIAHGLWSEGDKTSAVLVQNWTAVAYGVDIHPAASIGDGLFLDHALGIVIGETAIVEDGVSIWHNVTLGSTFKDSGARHPVIRKNAMLCTGATVLGRVEVGENAVVAAGALVTKDVAPNRLALGSPARDVGPVPQYFGALTNPNCTNK.

Belongs to the transferase hexapeptide repeat family.

The protein localises to the cytoplasm. The protein resides in the nucleus. It catalyses the reaction L-serine + acetyl-CoA = O-acetyl-L-serine + CoA. It functions in the pathway amino-acid biosynthesis; L-cysteine biosynthesis; L-cysteine from L-serine: step 1/2. The sequence is that of Putative serine acetyltransferase from Schizosaccharomyces pombe (strain 972 / ATCC 24843) (Fission yeast).